The sequence spans 67 residues: MGMRMMFTVFLLVVLATTVVSFTSDRTSDGRNAAFNAFDLIALTARQNCCNVPGCWAKYKHLCGRKR.

Positions 1-21 (MGMRMMFTVFLLVVLATTVVS) are cleaved as a signal peptide. A propeptide spanning residues 22 to 46 (FTSDRTSDGRNAAFNAFDLIALTAR) is cleaved from the precursor. Position 47 is a pyrrolidone carboxylic acid (glutamine 47). 2 cysteine pairs are disulfide-bonded: cysteine 49–cysteine 55 and cysteine 50–cysteine 63. A lacks the Ser-Xaa-Pro motif that is crucial for potent interaction with nAChR region spans residues 51 to 53 (NVP). A Cysteine amide modification is found at cysteine 63.

This sequence belongs to the conotoxin A superfamily. Expressed by the venom duct.

It is found in the secreted. In terms of biological role, alpha-conotoxins act on postsynaptic membranes, they bind to the nicotinic acetylcholine receptors (nAChR) and thus inhibit them. Has possibly a distinct nAChR binding mode from other alpha-conotoxins, due to a different three residue motif (lacks the Ser-Xaa-Pro motif). This is Alpha-conotoxin-like Pu1.1 from Conus pulicarius (Flea-bitten cone).